A 581-amino-acid polypeptide reads, in one-letter code: FAD-dependent monooxygenase DEP4 (581 aa).

43–46 is a binding site for FAD; sequence VWSK. 54 to 56 serves as a coordination point for NADP(+); the sequence is FAQ. Val-108 lines the FAD pocket. Residues 183-202, 219-220, and 351-352 contribute to the NADP(+) site; these read VGRSKSSYDAVYHLLCEGKR, AP, and DI. Position 470 (Met-470) interacts with FAD.

The protein belongs to the FAD-binding monooxygenase family. It depends on FAD as a cofactor.

It participates in polyketide biosynthesis. In terms of biological role, FAD-dependent monooxygenase; part of the gene cluster that mediates the biosynthesis of depudecin, a highly oxidized eleven-carbon linear polyketide that acts as a histone deacetylase (HDAC) inhibitor and makes a small contribution to pathogenesis. The reducing polyketide synthase DEP5 is the central enzyme in depudecin biosynthesis by yielding the backbone polyketide chain. The monooxygenases DEP2 and DEP4, as well as the uncharacterized protein DEP1, then act as tailoring enzymes to modify the intermediate polyketide chain into depudecin. This is FAD-dependent monooxygenase DEP4 from Alternaria brassicicola (Dark leaf spot agent).